The following is a 142-amino-acid chain: Midkine-B (142 aa).

A signal peptide spans 1-20 (MELRAFCVILLITILAVSSQ). 5 disulfide bridges follow: Cys36–Cys60, Cys44–Cys69, Cys51–Cys73, Cys83–Cys115, and Cys93–Cys125.

The protein belongs to the pleiotrophin family. In terms of tissue distribution, in adults, expression is highest in the brain, eye and bone, with lower expression in the heart and lung. Not expressed in the ovary. In the tailbud stage embryo, expressed in the head and tail regions as well as in the central nervous system (CNS).

The protein resides in the secreted. Secreted protein that functions as a cytokine and growth factor and mediates its signal through cell-surface proteoglycan and non-proteoglycan receptors. Binds cell-surface proteoglycan receptors via their chondroitin sulfate (CS) groups. Thereby regulates many processes like inflammatory response, cell proliferation, cell adhesion, cell growth, cell survival, tissue regeneration, cell differentiation and cell migration. Inhibits mesoderm formation and promotes neural formation during development. Plays a role in development of the neuromuscular junction (NMJ). Has antibacterial activity against both Gram-positive and Gram-negative bacteria. This is Midkine-B (mdk-b) from Xenopus laevis (African clawed frog).